We begin with the raw amino-acid sequence, 359 residues long: Histidinol-phosphate aminotransferase (359 aa).

Lysine 220 is subject to N6-(pyridoxal phosphate)lysine.

This sequence belongs to the class-II pyridoxal-phosphate-dependent aminotransferase family. Histidinol-phosphate aminotransferase subfamily. Homodimer. Pyridoxal 5'-phosphate serves as cofactor.

The enzyme catalyses L-histidinol phosphate + 2-oxoglutarate = 3-(imidazol-4-yl)-2-oxopropyl phosphate + L-glutamate. The protein operates within amino-acid biosynthesis; L-histidine biosynthesis; L-histidine from 5-phospho-alpha-D-ribose 1-diphosphate: step 7/9. The protein is Histidinol-phosphate aminotransferase of Neisseria gonorrhoeae (strain ATCC 700825 / FA 1090).